We begin with the raw amino-acid sequence, 354 residues long: Protein RecA (354 aa).

67 to 74 (GPESSGKT) contacts ATP.

Belongs to the RecA family.

It localises to the cytoplasm. Its function is as follows. Can catalyze the hydrolysis of ATP in the presence of single-stranded DNA, the ATP-dependent uptake of single-stranded DNA by duplex DNA, and the ATP-dependent hybridization of homologous single-stranded DNAs. It interacts with LexA causing its activation and leading to its autocatalytic cleavage. This chain is Protein RecA, found in Haemophilus influenzae (strain 86-028NP).